A 152-amino-acid chain; its full sequence is Regulator of G-protein signaling 21 (152 aa).

Residues 21–137 form the RGS domain; that stretch reads NMDTLLANQA…LKSEIYKKLV (117 aa).

As to expression, expressed ubiquitously.

In terms of biological role, inhibits signal transduction by increasing the GTPase activity of G protein alpha subunits thereby driving them into their inactive GDP-bound form. In Homo sapiens (Human), this protein is Regulator of G-protein signaling 21 (RGS21).